A 458-amino-acid polypeptide reads, in one-letter code: Retinoic acid receptor alpha-B (458 aa).

The interval 1–79 (MYESVDVVGL…PPSPPPPPRV (79 aa)) is modulating. Residues 48-75 (HWSGSNHSVETQSTSSEEIVPSPPSPPP) form a disordered region. The segment covering 49-64 (WSGSNHSVETQSTSSE) has biased composition (polar residues). The nuclear receptor DNA-binding region spans 80–155 (YKPCFVCQDK…VGMSKESVRN (76 aa)). 2 consecutive NR C4-type zinc fingers follow at residues 83 to 103 (CFVC…CEGC) and 119 to 138 (CHRE…CQYC). Positions 156–177 (DRNKRKKDDKKQECLENYVLSP) are hinge. The region spanning 178-412 (DTEKMIEQVR…PLIQEMLENS (235 aa)) is the NR LBD domain. The 9aaTAD signature appears at 403–411 (PLIQEMLEN). The disordered stretch occupies residues 411 to 458 (NSEGLEGGGSKGAGGGGGGGGGKGAPPGSCSPSLSPSSAHSSPSAHSP). The span at 415-435 (LEGGGSKGAGGGGGGGGGKGA) shows a compositional bias: gly residues. The span at 436–458 (PPGSCSPSLSPSSAHSSPSAHSP) shows a compositional bias: low complexity.

The protein belongs to the nuclear hormone receptor family. NR1 subfamily. Heterodimer; with an rxr molecule. Binds DNA preferentially as a rar/rxr heterodimer. In the embryo, zygotic expression largely overlaps that of raraa, with high levels in hindbrain, lateral plate mesoderm (LPM) and tail bud, but in later stages rarab is expressed more broadly in the brain, pectoral fin bud and pharyngeal arches.

The protein resides in the nucleus. Functionally, receptor for retinoic acid. Retinoic acid receptors bind as heterodimers to their target response elements in response to their ligands, all-trans or 9-cis retinoic acid, and regulate gene expression in various biological processes. The rar/rxr heterodimers bind to the retinoic acid response elements (RARE) composed of tandem 5'-AGGTCA-3' sites known as DR1-DR5. Required for hindbrain development and, in lateral plate mesoderm, for specification of the pectoral fins. In Danio rerio (Zebrafish), this protein is Retinoic acid receptor alpha-B.